The primary structure comprises 608 residues: FAD-binding monooxygenase ktnD (608 aa).

A glycan (N-linked (GlcNAc...) asparagine) is linked at N4. Residues 17–37 (ATVVIIGAGVSGMCMAIDLLH) traverse the membrane as a helical segment. Residues 56–59 (TWAN), 68–69 (DV), and Y74 each bind FAD. 66 to 68 (ASD) provides a ligand contact to NADP(+). N-linked (GlcNAc...) asparagine glycosylation is present at N114. Residues 201 to 207 (NGASAIQ) and 224 to 225 (RS) each bind NADP(+). N-linked (GlcNAc...) asparagine glycosylation is present at N325. Residues 535-555 (ALVSNVTLFLGVALAAGGVYW) form a helical membrane-spanning segment.

Belongs to the FAD-binding monooxygenase family. It depends on FAD as a cofactor.

The protein localises to the membrane. Non-reducing polyketide synthase; part of the gene cluster that mediates the biosynthesis of the bicoumarin kotanin. The non-reducing polyketide synthase ktnS first catalyzes the formation of the pentaketidic 4,7-dihydroxy-5-methylcoumarin from acetyl coenzyme A and 4 malonyl coenzyme A molecules. Further O-methylation by ktnB leads to the formation of 7-demethylsiderin. Then, an oxidative phenol coupling catalyzed by the cytochrome P450 monooxygenase ktnC forms the 8,8'-dimer P-orlandin via dimerization the monomeric precursor, 7-demethylsiderin. P-orlandin is subsequently O-methylated in a stepwise fashion to demethylkotanin and kotanin. The function of ktnD within the pathway has not been determined yet. The protein is FAD-binding monooxygenase ktnD of Aspergillus niger (strain ATCC MYA-4892 / CBS 513.88 / FGSC A1513).